The following is a 2150-amino-acid chain: Zinc finger protein sdc-3 (2150 aa).

A dosage compensation domain 1 region spans residues 443–987 (QEITSPMFAL…DQVENEEPER (545 aa)). 4 disordered regions span residues 874–894 (EKEWHEMRAAQRAQKEKEEED), 1261–1373 (GSVV…GPEV), 1411–1448 (FETSPVPAPEGNIPSRAHSSDDDVQVISSETDPNGPIN), and 1491–1670 (EVLQ…SEKL). The span at 1267–1293 (TNQQEENVTSEGPTLQEGSSIPSSSHI) shows a compositional bias: polar residues. A compositionally biased stretch (basic residues) spans 1321-1333 (KKSGKTTRGRPKK). Basic and acidic residues predominate over residues 1347-1357 (GQKEEAAHEPE). The span at 1504–1524 (SSKKRGRRRKKTPPHIAKARK) shows a compositional bias: basic residues. The interval 1508–1516 (RGRRRKKTP) is sex determination domain. Over residues 1585 to 1598 (EDLHETERPGHVGE) the composition is skewed to basic and acidic residues. Polar residues predominate over residues 1638–1648 (IQSQAGTNASP). C2H2-type zinc fingers lie at residues 2078–2105 (HKCVQCSIRNQSVYFSSYSLLELHGKLH) and 2117–2141 (DDCQDCYETLTSSFEVIVHRINHHH). Residues 2080 to 2105 (CVQCSIRNQSVYFSSYSLLELHGKLH) are dosage compensation domain 2.

Component of the SDC complex, which consists of sdc-1, sdc-2 and sdc-3. Within the complex, interacts with sdc-1 and sdc-2. Interacts with dpy-21. Sumoylated. Sumoylation is important for assembly of the dosage compensation complex and its robust binding to the X chromosome. Expressed in somatic and in germline tissues in hermaphrodites (XX). In males (XO), only present in embryos younger than the 100-cell stage (at protein level).

The protein resides in the chromosome. The protein localises to the nucleus. In terms of biological role, component of the SDC complex that functions in sex determination and in X chromosome dosage compensation specifically in hermaphrodite (XX) animals. Plays a central role in the recruitment of the condensin I-like dosage compensation complex to the male sex-determining autosomal gene her-1, thereby contributing to its repression and initiating hermaphrodite sexual development. Involved in the recruitment and assembly of the dosage compensation complex and the dosage compensation protein dpy-21 onto the X chromosomes in hermaphrodites, which leads to a reduction of X-linked gene transcription and an equalization of X-linked gene expression between the sexes. This chain is Zinc finger protein sdc-3 (sdc-3), found in Caenorhabditis elegans.